A 288-amino-acid polypeptide reads, in one-letter code: Co-chaperone protein DjlA (288 aa).

Residues 1–6 (MNFIGK) are Periplasmic-facing. The helical transmembrane segment at 7–30 (ILGFIIGYRFGGLFGGIAGLILGH) threads the bilayer. Topologically, residues 31-288 (IADKKLYELG…DLICKVKGWK (258 aa)) are cytoplasmic. In terms of domain architecture, J spans 222-288 (DAYKVLGVNA…DLICKVKGWK (67 aa)).

In terms of assembly, homodimer.

Its subcellular location is the cell inner membrane. Functionally, regulatory DnaK co-chaperone. Direct interaction between DnaK and DjlA is needed for the induction of the wcaABCDE operon, involved in the synthesis of a colanic acid polysaccharide capsule, possibly through activation of the RcsB/RcsC phosphotransfer signaling pathway. The colanic acid capsule may help the bacterium survive conditions outside the host. In Mannheimia succiniciproducens (strain KCTC 0769BP / MBEL55E), this protein is Co-chaperone protein DjlA.